The primary structure comprises 540 residues: Chaperonin GroEL (540 aa).

ATP-binding positions include 30-33 (TLGP), lysine 51, 87-91 (DGTTT), glycine 415, and aspartate 495.

Belongs to the chaperonin (HSP60) family. In terms of assembly, forms a cylinder of 14 subunits composed of two heptameric rings stacked back-to-back. Interacts with the co-chaperonin GroES.

It is found in the cytoplasm. The enzyme catalyses ATP + H2O + a folded polypeptide = ADP + phosphate + an unfolded polypeptide.. Functionally, together with its co-chaperonin GroES, plays an essential role in assisting protein folding. The GroEL-GroES system forms a nano-cage that allows encapsulation of the non-native substrate proteins and provides a physical environment optimized to promote and accelerate protein folding. The sequence is that of Chaperonin GroEL from Serratia marcescens.